A 437-amino-acid polypeptide reads, in one-letter code: D-aminoacyl-tRNA deacylase (437 aa).

Belongs to the DtdA deacylase family. In terms of assembly, monomer. Zn(2+) serves as cofactor.

It catalyses the reaction a D-aminoacyl-tRNA + H2O = a tRNA + a D-alpha-amino acid + H(+). The catalysed reaction is glycyl-tRNA(Ala) + H2O = tRNA(Ala) + glycine + H(+). In terms of biological role, D-aminoacyl-tRNA deacylase with broad substrate specificity. By recycling D-aminoacyl-tRNA to D-amino acids and free tRNA molecules, this enzyme counteracts the toxicity associated with the formation of D-aminoacyl-tRNA entities in vivo. The polypeptide is D-aminoacyl-tRNA deacylase (Methanoculleus marisnigri (strain ATCC 35101 / DSM 1498 / JR1)).